The sequence spans 415 residues: Adipocyte plasma membrane-associated protein (415 aa).

Over 1–39 the chain is Cytoplasmic; the sequence is MNEPEGLRFRRLNRPHIITDETHEPQYKATSTYSGKVFR. The helical transmembrane segment at 40–60 threads the bilayer; it reads VTLLTMVAFLLLPLLVVVFVL. Residues 61-412 lie on the Extracellular side of the membrane; sequence ESPIQPEVFS…RSPYLCKLDL (352 aa). The N-linked (GlcNAc...) asparagine glycan is linked to N159.

Belongs to the strictosidine synthase family.

The protein localises to the membrane. The polypeptide is Adipocyte plasma membrane-associated protein (apmap) (Danio rerio (Zebrafish)).